The primary structure comprises 175 residues: Shikimate kinase (175 aa).

Position 11–16 (11–16) interacts with ATP; that stretch reads GAGKTT. T15 contributes to the Mg(2+) binding site. Residues D33, R57, and G79 each contribute to the substrate site. R118 provides a ligand contact to ATP. R140 contacts substrate.

It belongs to the shikimate kinase family. As to quaternary structure, monomer. The cofactor is Mg(2+).

Its subcellular location is the cytoplasm. The enzyme catalyses shikimate + ATP = 3-phosphoshikimate + ADP + H(+). It participates in metabolic intermediate biosynthesis; chorismate biosynthesis; chorismate from D-erythrose 4-phosphate and phosphoenolpyruvate: step 5/7. Catalyzes the specific phosphorylation of the 3-hydroxyl group of shikimic acid using ATP as a cosubstrate. This chain is Shikimate kinase, found in Phocaeicola vulgatus (strain ATCC 8482 / DSM 1447 / JCM 5826 / CCUG 4940 / NBRC 14291 / NCTC 11154) (Bacteroides vulgatus).